An 86-amino-acid polypeptide reads, in one-letter code: Small ribosomal subunit protein uS17 (86 aa).

The protein belongs to the universal ribosomal protein uS17 family. Part of the 30S ribosomal subunit.

In terms of biological role, one of the primary rRNA binding proteins, it binds specifically to the 5'-end of 16S ribosomal RNA. The polypeptide is Small ribosomal subunit protein uS17 (Lactococcus lactis subsp. cremoris (strain MG1363)).